The sequence spans 543 residues: Chaperonin GroEL 2 (543 aa).

Residues 29–32, 86–90, glycine 413, 479–481, and aspartate 495 contribute to the ATP site; these read TLGP, DGTTT, and NAA.

The protein belongs to the chaperonin (HSP60) family. As to quaternary structure, forms a cylinder of 14 subunits composed of two heptameric rings stacked back-to-back. Interacts with the co-chaperonin GroES.

It localises to the cytoplasm. It catalyses the reaction ATP + H2O + a folded polypeptide = ADP + phosphate + an unfolded polypeptide.. Together with its co-chaperonin GroES, plays an essential role in assisting protein folding. The GroEL-GroES system forms a nano-cage that allows encapsulation of the non-native substrate proteins and provides a physical environment optimized to promote and accelerate protein folding. The sequence is that of Chaperonin GroEL 2 from Prochlorococcus marinus (strain NATL1A).